The chain runs to 120 residues: Large ribosomal subunit protein eL18 (120 aa).

It belongs to the eukaryotic ribosomal protein eL18 family.

The sequence is that of Large ribosomal subunit protein eL18 from Thermococcus onnurineus (strain NA1).